The chain runs to 304 residues: Phospholipase A1 (304 aa).

C6 and C90 form a disulfide bridge. N61 carries an N-linked (GlcNAc...) asparagine glycan. S140 (nucleophile) is an active-site residue. The active-site Charge relay system is the D168. Intrachain disulfides connect C179–C184 and C222–C231. Catalysis depends on H233, which acts as the Charge relay system. 3 disulfides stabilise this stretch: C248/C272, C249/C297, and C265/C270.

Belongs to the AB hydrolase superfamily. Lipase family. Expressed by the venom gland.

It localises to the secreted. It carries out the reaction a 1,2-diacyl-sn-glycero-3-phosphocholine + H2O = a 2-acyl-sn-glycero-3-phosphocholine + a fatty acid + H(+). In terms of biological role, catalyzes the hydrolysis of phosphatidylcholine with phospholipase A1 activity. May act as an allergen and induce hemolytic activity. The chain is Phospholipase A1 from Vespa velutina (Asian yellow-legged hornet).